We begin with the raw amino-acid sequence, 100 residues long: Small ribosomal subunit protein uS14c (100 aa).

Belongs to the universal ribosomal protein uS14 family. Part of the 30S ribosomal subunit.

It is found in the plastid. The protein localises to the chloroplast. Functionally, binds 16S rRNA, required for the assembly of 30S particles. This Lepidium virginicum (Virginia pepperweed) protein is Small ribosomal subunit protein uS14c.